The following is a 2036-amino-acid chain: MISMMETSTTEKKSNTDNSILKKIIIDSWRQRLSPIEWSLKLYNGFYNNNNNNNSNNNNNNNNNNNNNNVDNNEINSIELCEILLDLMNIGQSPSPLLVSYLRYAISIKLIGYNEFFESVYKFSSISRAQHFSVILDILFDVINIINYPSHHQNIFNSDNIENSNNNNNNNNNNNNNNSNNNIGFKVSSLSSSLKRNNSKIISTPIVTLLSSPSPSSSSSSSTSPSSQQPQPPQPQPLSYTSPIKKTVLIKNPDSTDSDEIMKVKEEPIKFKTTTTTTSTTTTTSTTSTTTNEISSSPPTNGNGEETTITTKTEDSNGINGIDSEDHKGENGKASPQMNGVHPGSDGNISHKRKEMDSNTIFDDDDSNGVDQHCSNKKMKHTDTLTQPQPKQIQNPQQQEQQQQQQENIEQNQHGNLHLHQPSQQQQQQQQQTSQPSLTTTTASAVTQTTTTASTINKSTKATTKKNYHKQLLSFTRLATLLFKVIEYYFQEDERINNINKSVNNNNNNNNNNNNNNNNNNNNNYNNNNNDSMDQNSNNPAVKYNSNNNNINNNNNNNNNNNNNNNNNNNNNNNNNNNNNINNILYKNSVKSLEILSIIQNNSTFKTLIYLAKYEFTLSSFKDLVLPFLAIQNSIRDNIVKQNIPSTQLISSQVKGQEFASQQTQLLNPLFQLIKQKYQKLFIDFRRILINKQEILPNHDIGSLVHGSSQSDKQIILSFEIIIDQEINGNHFKSSHTKLAISRGKPNELDTILNLKNNKNNNNNNNNSNGNGNGIDIGSSTDGSNKLSSTNIEEGNNNNNSSTHLNGNDQSQQSLDDEEPKQSQQQQLPPPSPPQQSHQKIQIQKQLQLIRQAKNLENVSDCFFKLLTLKTVKGLSDVEFLLEIVKILFQKLVRCNPNSNEYKKTRLFLLFKIPHFYSLMIDNYGNNNNNNNTNTNNINNNKNKNSKKSNNKNKNNKNNNKKNKNNNNNNNNNNNNNNNNNNNNNNNNNNNNNNNNNNNGESSDKNEINPEGSIGSNNNNDNDNNDETNTNTSSNNNNNNNNSNDNENVTDNNKNNNSNTKNNNNSNNNNNNNNNNNNNNNNNNNNNNNNNNNNNNNNNNNNNNNNNNNNNNNNNNNNKKNKDLNLHGNIIENVLYQINQFPSLYNVEDNIILSLIQILIKKHLVDINLLKSLFPNYHTDIDSIDSEIQSPPSSELSFDNLFDIHSIADIVKIKELIESLLNNSDPNNVSIMKRLFDFIKNHLINSFDYQDKLLNVLFNAKNIDYDSNKLLIAVIMYIFSDPLVIDTIDVHGYTLRLVMILIDVCESYGSSTTATTTEDIDIFKNENDNHDQKHLYFYFTIPFNLLYTLLIILYDVKNNKYNLDLIKSKLSESLNNKNNSRKSKSNNSSNNSINNINNNNNNNNNNNNNNNNNNNNNNNNNNFIQWIYNMIKDTNFSNGNGVNNVSTSFEFQFLKNLFDSDLGEDSIEKFQNFSQREYSSWDIVSKLPNVLYNIFDCYDRNIIQEEKVTQTMQLLFQYIPFSPIIVFDYLSKTKSSFFNVSPSSSTTTTTTTTSTTTTITTTTTNSSAYSTTTTTSASTSLPKSTDGKLLNGKSSNTSTTTTKNNGDTPTITTVITTMSSKNDKPLSLVEACLTNLNENRLLFRLSDYYKSLISEDHLNDLYKLFDPISETINLLLLSPKLQKFNELGYYSNQSTLFNSICLTNLSPPNQLSNMTPANAIRQVIDQFLTKSVSPNLSNLERDIKYIHMRLSNDLCQIVNLVSLEILDIILQSCQIESLYSIRAMELGGYILGGLIGIESLPILLNSIIPSWSEHIQTSLHGQLLSYFCFSSIVNSNALYYIQTDLCIQQSFKKFFLLLNDTMKRILSVAPLNGLITFCLSTITLFIHLNHSSITTYLYNSSSNTQLINQLYEIISKNQSLKKKQKLKQKKQQHNNNNGGEYNIDQDHIEQIQQQQQQYQKQQQQRKDEPNYEKLEEFIKTQYQRNNHSKLKSIFNILSISQLEDLSMSILNLSNFFLAISIFEDKNDLQYCSKLFN.

Disordered stretches follow at residues 51–70, 159–184, 212–451, 501–580, 754–840, 928–1124, 1375–1419, and 1565–1608; these read NNNN…NNNV, DNIE…NNIG, SPSP…QTTT, KSVN…NNNN, NLKN…SHQK, NNNN…NKDL, NNKN…NNNN, and NSSA…NGDT. A compositionally biased stretch (low complexity) spans 212 to 229; the sequence is SPSPSSSSSSSTSPSSQQ. Residues 260–270 show a composition bias toward basic and acidic residues; it reads EIMKVKEEPIK. Composition is skewed to low complexity over residues 273–291, 300–311, 387–451, 501–539, 547–580, and 754–770; these read TTTT…STTT, TNGNGEETTITT, QPQP…QTTT, KSVN…NSNN, NNNN…NNNN, and NLKN…NSNG. Residues 505–584 are a coiled coil; it reads NNNNNNNNNN…NNNNNNINNI (80 aa). Positions 778-787 are enriched in polar residues; it reads GSSTDGSNKL. 2 stretches are compositionally biased toward low complexity: residues 788-808 and 928-943; these read SSTN…LNGN and NNNN…NNKN. Positions 943 to 977 form a coiled coil; the sequence is NKNSKKSNNKNKNNKNNNKKNKNNNNNNNNNNNNN. The span at 944–964 shows a compositional bias: basic residues; the sequence is KNSKKSNNKNKNNKNNNKKNK. Composition is skewed to low complexity over residues 965-999, 1017-1118, 1385-1419, 1565-1584, and 1594-1608; these read NNNN…NNNN, SNNS…NNNN, NSSA…LPKS, and SSNT…NGDT. Positions 1915-1968 form a coiled coil; that stretch reads SKNQSLKKKQKLKQKKQQHNNNNGGEYNIDQDHIEQIQQQQQQYQKQQQQRKDE.

It belongs to the Mediator complex subunit 24 family. As to quaternary structure, component of the Mediator complex.

The protein resides in the nucleus. Component of the Mediator complex, a coactivator involved in the regulated transcription of nearly all RNA polymerase II-dependent genes. Mediator functions as a bridge to convey information from gene-specific regulatory proteins to the basal RNA polymerase II transcription machinery. Mediator is recruited to promoters by direct interactions with regulatory proteins and serves as a scaffold for the assembly of a functional preinitiation complex with RNA polymerase II and the general transcription factors. In Dictyostelium discoideum (Social amoeba), this protein is Putative mediator of RNA polymerase II transcription subunit 24 (med24).